A 168-amino-acid polypeptide reads, in one-letter code: Transcription elongation factor GreB (168 aa).

Residues 61 to 84 (KKMLREIDSRVRFLRKRLENLKVV) are a coiled coil.

It belongs to the GreA/GreB family. GreB subfamily.

Its function is as follows. Necessary for efficient RNA polymerase transcription elongation past template-encoded arresting sites. The arresting sites in DNA have the property of trapping a certain fraction of elongating RNA polymerases that pass through, resulting in locked ternary complexes. Cleavage of the nascent transcript by cleavage factors such as GreA or GreB allows the resumption of elongation from the new 3'terminus. GreB releases sequences of up to 9 nucleotides in length. This Pseudomonas aeruginosa (strain ATCC 15692 / DSM 22644 / CIP 104116 / JCM 14847 / LMG 12228 / 1C / PRS 101 / PAO1) protein is Transcription elongation factor GreB.